The following is a 146-amino-acid chain: Protein archease (146 aa).

Residues Asp-16, Asp-145, and Ile-146 each coordinate Ca(2+).

Belongs to the archease family.

In terms of biological role, activates the tRNA-splicing ligase complex by facilitating the enzymatic turnover of catalytic subunit RtcB. Acts by promoting the guanylylation of RtcB, a key intermediate step in tRNA ligation. Can also alter the NTP specificity of RtcB such that ATP, dGTP or ITP is used efficiently. The polypeptide is Protein archease (Methanosarcina acetivorans (strain ATCC 35395 / DSM 2834 / JCM 12185 / C2A)).